Consider the following 125-residue polypeptide: Histone H2A (125 aa).

Residues 1 to 18 (MSGRGKGGKVKGKSKTRS) are compositionally biased toward basic residues. The interval 1–23 (MSGRGKGGKVKGKSKTRSSRAGL) is disordered. Serine 2 carries the N-acetylserine modification. Glutamine 104 is modified (N5-methylglutamine).

This sequence belongs to the histone H2A family. As to quaternary structure, the nucleosome is a histone octamer containing two molecules each of H2A, H2B, H3 and H4 assembled in one H3-H4 heterotetramer and two H2A-H2B heterodimers. The octamer wraps approximately 147 bp of DNA.

The protein resides in the nucleus. It is found in the chromosome. Its function is as follows. Core component of nucleosome. Nucleosomes wrap and compact DNA into chromatin, limiting DNA accessibility to the cellular machineries which require DNA as a template. Histones thereby play a central role in transcription regulation, DNA repair, DNA replication and chromosomal stability. DNA accessibility is regulated via a complex set of post-translational modifications of histones, also called histone code, and nucleosome remodeling. The polypeptide is Histone H2A (Sepia officinalis (Common cuttlefish)).